Consider the following 254-residue polypeptide: 3-oxo-5-alpha-steroid 4-dehydrogenase 2 (254 aa).

A run of 4 helical transmembrane segments spans residues 8-28 (VPVLAGSATLATMGTLILCFG), 72-92 (PRSLFGPPGNVLLGLFSAHYF), 146-166 (FSVGVFFFILGMGINIHSDCM), and 206-226 (LATWSVPAFAFAFFTLCFLGM).

It belongs to the steroid 5-alpha reductase family.

It is found in the microsome membrane. The protein resides in the endoplasmic reticulum membrane. The catalysed reaction is a 3-oxo-5alpha-steroid + NADP(+) = a 3-oxo-Delta(4)-steroid + NADPH + H(+). It carries out the reaction 17beta-hydroxy-5alpha-androstan-3-one + NADP(+) = testosterone + NADPH + H(+). The enzyme catalyses 5alpha-pregnane-3,20-dione + NADP(+) = progesterone + NADPH + H(+). Functionally, converts testosterone (T) into 5-alpha-dihydrotestosterone (DHT) and progesterone or corticosterone into their corresponding 5-alpha-3-oxosteroids. It plays a central role in sexual differentiation and androgen physiology. The sequence is that of 3-oxo-5-alpha-steroid 4-dehydrogenase 2 (Srd5a2) from Mus musculus (Mouse).